A 297-amino-acid chain; its full sequence is Probable endonuclease 4 (297 aa).

Positions 68, 109, 144, 178, 181, 213, 226, 228, and 258 each coordinate Zn(2+).

This sequence belongs to the AP endonuclease 2 family. The cofactor is Zn(2+).

It carries out the reaction Endonucleolytic cleavage to 5'-phosphooligonucleotide end-products.. Endonuclease IV plays a role in DNA repair. It cleaves phosphodiester bonds at apurinic or apyrimidinic (AP) sites, generating a 3'-hydroxyl group and a 5'-terminal sugar phosphate. In Enterococcus faecalis (strain ATCC 700802 / V583), this protein is Probable endonuclease 4.